A 681-amino-acid chain; its full sequence is MNGKKLPDGGILFDETDDEDDDANLAATDTAEASRSVAGMDWNAGWKNESGLKGMDLIGEFVKHLPNSPGVYRMFNEAGDVLYVGKARSLKKRVGNYAQGRVHSNRIAQMVRFTTHMEFVTTRTETEALLLEANLIKRLRPRFNVLLRDDKSFPYILITADNRAPAIFKHRGARARKGDYFGPFASAGAVGRTINSLQRAFLIRTCTDSVFETRTRPCLLYQIKRCSGPCTHEVSDEGYAELVKEAKDFLSGKSQAVKTAIARQMNEASEDLDFERAAIYRDRLAALSHVQSHQGINPAGIEEADVFAIHHEGGISCIQVFFFRTGQNWGNRAYFPKADPSLPGSEILNAFLAQFYDDKPVPKQILLSETVEEQELLAAALGEKAGHKVTISVPQRGEKKDITDHVLANAREAHGRKLAETSSQARLLKGFAETFNLPYVPRRIEIYDNSHIMGTNAVGGMVVAGPEGFVKNQYRKFNIKSTDITPGDDFGMMREVMTRRFSRLLKEEGKPDRAQTPTPEEAADLPFPAWPDVILIDGGQGQMTAVRAILDELGIRDCVTAIGVAKGVDREAGRERFFADGRSDFSLPPRDPVLYFIQRMRDEAHRFAIGSHRARRKKEMVRNPLDEISGIGPGRKRSLLQHFGTAKAVSRAGLNDLMTVTGISETVARQIYNHFHESGSD.

The interval 1–23 (MNGKKLPDGGILFDETDDEDDDA) is disordered. Positions 14–23 (DETDDEDDDA) are enriched in acidic residues. The 79-residue stretch at 67 to 145 (NSPGVYRMFN…IKRLRPRFNV (79 aa)) folds into the GIY-YIG domain. The UVR domain occupies 255–290 (QAVKTAIARQMNEASEDLDFERAAIYRDRLAALSHV).

Belongs to the UvrC family. As to quaternary structure, interacts with UvrB in an incision complex.

Its subcellular location is the cytoplasm. Functionally, the UvrABC repair system catalyzes the recognition and processing of DNA lesions. UvrC both incises the 5' and 3' sides of the lesion. The N-terminal half is responsible for the 3' incision and the C-terminal half is responsible for the 5' incision. The polypeptide is UvrABC system protein C (Agrobacterium fabrum (strain C58 / ATCC 33970) (Agrobacterium tumefaciens (strain C58))).